The sequence spans 204 residues: SOSS complex subunit B homolog (204 aa).

Positions 24 to 94 form a DNA-binding region, OB; the sequence is IVLEVGVATV…TLYSGKNGEV (71 aa). The disordered stretch occupies residues 115–204; that stretch reads RAEQQAVANP…GRGGLKGERR (90 aa). 2 stretches are compositionally biased toward low complexity: residues 122–131 and 139–183; these read ANPAATPAGL and GLPA…QTTT. The segment covering 187-198 has biased composition (gly residues); that stretch reads TRGGRGGGGRGG.

It belongs to the SOSS-B family.

The sequence is that of SOSS complex subunit B homolog from Drosophila melanogaster (Fruit fly).